Here is a 178-residue protein sequence, read N- to C-terminus: ATP-dependent protease subunit HslV (178 aa).

Thr-7 is a catalytic residue. Residues Gly-162, Cys-165, and Thr-168 each contribute to the Na(+) site.

It belongs to the peptidase T1B family. HslV subfamily. In terms of assembly, a double ring-shaped homohexamer of HslV is capped on each side by a ring-shaped HslU homohexamer. The assembly of the HslU/HslV complex is dependent on binding of ATP.

The protein localises to the cytoplasm. It carries out the reaction ATP-dependent cleavage of peptide bonds with broad specificity.. Its activity is regulated as follows. Allosterically activated by HslU binding. Functionally, protease subunit of a proteasome-like degradation complex believed to be a general protein degrading machinery. In Paraburkholderia xenovorans (strain LB400), this protein is ATP-dependent protease subunit HslV.